The chain runs to 348 residues: UDP-3-O-acylglucosamine N-acyltransferase (348 aa).

His-241 (proton acceptor) is an active-site residue.

Belongs to the transferase hexapeptide repeat family. LpxD subfamily. Homotrimer.

It carries out the reaction a UDP-3-O-[(3R)-3-hydroxyacyl]-alpha-D-glucosamine + a (3R)-hydroxyacyl-[ACP] = a UDP-2-N,3-O-bis[(3R)-3-hydroxyacyl]-alpha-D-glucosamine + holo-[ACP] + H(+). It participates in bacterial outer membrane biogenesis; LPS lipid A biosynthesis. Its function is as follows. Catalyzes the N-acylation of UDP-3-O-acylglucosamine using 3-hydroxyacyl-ACP as the acyl donor. Is involved in the biosynthesis of lipid A, a phosphorylated glycolipid that anchors the lipopolysaccharide to the outer membrane of the cell. The polypeptide is UDP-3-O-acylglucosamine N-acyltransferase (Neisseria meningitidis serogroup C / serotype 2a (strain ATCC 700532 / DSM 15464 / FAM18)).